The following is a 24-amino-acid chain: Fibrinogen gamma chain (24 aa).

As to quaternary structure, heterohexamer; disulfide linked. Contains 2 sets of 3 non-identical chains (alpha, beta and gamma). The 2 heterotrimers are in head to head conformation with the N-termini in a small central domain. Conversion of fibrinogen to fibrin is triggered by thrombin, which cleaves fibrinopeptides A and B from alpha and beta chains, and thus exposes the N-terminal polymerization sites responsible for the formation of the soft clot. The soft clot is converted into the hard clot by factor XIIIA which catalyzes the epsilon-(gamma-glutamyl)lysine cross-linking between gamma chains (stronger) and between alpha chains (weaker) of different monomers.

The protein localises to the secreted. Functionally, together with fibrinogen alpha (FGA) and fibrinogen beta (FGB), polymerizes to form an insoluble fibrin matrix. Has a major function in hemostasis as one of the primary components of blood clots. In addition, functions during the early stages of wound repair to stabilize the lesion and guide cell migration during re-epithelialization. Was originally thought to be essential for platelet aggregation, based on in vitro studies using anticoagulated blood. However, subsequent studies have shown that it is not absolutely required for thrombus formation in vivo. Enhances expression of SELP in activated platelets via an ITGB3-dependent pathway. Maternal fibrinogen is essential for successful pregnancy. Fibrin deposition is also associated with infection, where it protects against IFNG-mediated hemorrhage. May also facilitate the antibacterial immune response via both innate and T-cell mediated pathways. The sequence is that of Fibrinogen gamma chain (FGG) from Canis lupus familiaris (Dog).